The following is a 36-amino-acid chain: Cytochrome b6-f complex subunit 7 (36 aa).

Topologically, residues 1 to 5 are lumenal; the sequence is NAAAE. Residues 6-28 form a helical membrane-spanning segment; the sequence is IFRIAAVMNGLTLVGVAIGFVLL. The Stromal segment spans residues 29 to 36; that stretch reads RIEATVEE.

It belongs to the PetM family. In terms of assembly, the 4 large subunits of the cytochrome b6-f complex are cytochrome b6, subunit IV (17 kDa polypeptide, PetD), cytochrome f and the Rieske protein, while the 4 small subunits are PetG, PetL, PetM and PetN. The complex functions as a dimer.

The protein localises to the plastid. The protein resides in the chloroplast thylakoid membrane. In terms of biological role, component of the cytochrome b6-f complex, which mediates electron transfer between photosystem II (PSII) and photosystem I (PSI), cyclic electron flow around PSI, and state transitions. The protein is Cytochrome b6-f complex subunit 7 of Spinacia oleracea (Spinach).